The sequence spans 272 residues: Ribosomal RNA small subunit methyltransferase A (272 aa).

Positions 18, 20, 45, 66, 91, and 113 each coordinate S-adenosyl-L-methionine.

It belongs to the class I-like SAM-binding methyltransferase superfamily. rRNA adenine N(6)-methyltransferase family. RsmA subfamily.

The protein resides in the cytoplasm. It catalyses the reaction adenosine(1518)/adenosine(1519) in 16S rRNA + 4 S-adenosyl-L-methionine = N(6)-dimethyladenosine(1518)/N(6)-dimethyladenosine(1519) in 16S rRNA + 4 S-adenosyl-L-homocysteine + 4 H(+). Functionally, specifically dimethylates two adjacent adenosines (A1518 and A1519) in the loop of a conserved hairpin near the 3'-end of 16S rRNA in the 30S particle. May play a critical role in biogenesis of 30S subunits. This Pectobacterium atrosepticum (strain SCRI 1043 / ATCC BAA-672) (Erwinia carotovora subsp. atroseptica) protein is Ribosomal RNA small subunit methyltransferase A.